The following is a 220-amino-acid chain: Glutathione S-transferase U26 (220 aa).

Positions 4–83 constitute a GST N-terminal domain; that stretch reads DQVILLDYWP…YIDEVWSDAS (80 aa). Glutathione is bound by residues 14-15, 40-41, 54-55, and 67-68; these read SM, VK, KI, and ES. One can recognise a GST C-terminal domain in the interval 89-210; sequence DPYQKSRARF…ADSDRIIEYV (122 aa).

This sequence belongs to the GST superfamily. Tau family.

Its subcellular location is the cytoplasm. The protein localises to the cytosol. It catalyses the reaction RX + glutathione = an S-substituted glutathione + a halide anion + H(+). In terms of biological role, in vitro, possesses glutathione S-transferase activity toward 1-chloro-2,4-dinitrobenzene (CDNB). May be involved in the conjugation of reduced glutathione to a wide number of exogenous and endogenous hydrophobic electrophiles and have a detoxification role against certain herbicides. This chain is Glutathione S-transferase U26 (GSTU26), found in Arabidopsis thaliana (Mouse-ear cress).